The primary structure comprises 215 residues: Osmoprotectant import permease protein OsmW (215 aa).

Positions 18-202 (TFQHLWLVAL…LLAIVLDWLL (185 aa)) constitute an ABC transmembrane type-1 domain. 6 helical membrane passes run 24–44 (LVALAVGLAIIIGVPLGVLIV), 51–73 (TPVLGAATLLLTIPSIALFGLMI), 78–100 (LIGHGIGVLPAVTAVFLYSLLPI), 132–152 (WVEIPMALPVIFGGIRTAVVM), 153–173 (NIGVMAIAAVIGAGGLGLLLL), and 183–203 (MLIAGALMICLLAIVLDWLLH).

Belongs to the binding-protein-dependent transport system permease family. In terms of assembly, the complex is composed of two ATP-binding proteins (OsmV), two transmembrane proteins (OsmW and OsmY) and a solute-binding protein (OsmX).

Its subcellular location is the cell inner membrane. In terms of biological role, part of the OsmU ABC transporter complex, which is involved in the uptake of osmoprotectants such as choline-O-sulfate and glycine betaine. Probably responsible for the translocation of the substrate across the membrane. The sequence is that of Osmoprotectant import permease protein OsmW (osmW) from Salmonella typhimurium (strain LT2 / SGSC1412 / ATCC 700720).